Consider the following 653-residue polypeptide: Thioredoxin domain-containing protein 3 homolog (653 aa).

In terms of domain architecture, Thioredoxin spans 9–114 (LQETLNTQEA…QETIQETLKN (106 aa)). A disulfide bridge links C38 with C41. Residues 155–299 (KQITVALIKP…FFFPDFKPPT (145 aa)) form an NDK 1 region. The disordered stretch occupies residues 300–323 (YRSAKSAASRASGRRSKTPSQKPR). The segment covering 301–310 (RSAKSAASRA) has biased composition (low complexity). 2 NDK regions span residues 324-459 (LQRT…IFHV) and 459-597 (VEQT…QFDW). A disordered region spans residues 603–653 (QAEEGEVNETSGEQPTDEQSGETEKTEEDGEHEGAQSDQQQAVSEAMEKEE). Residues 617 to 633 (PTDEQSGETEKTEEDGE) show a composition bias toward acidic residues.

It in the C-terminal section; belongs to the NDK family. Testis-specific.

In terms of biological role, may be required during the final stages of sperm tail maturation. May act by reducing disulfide bonds within the sperm components. The chain is Thioredoxin domain-containing protein 3 homolog (CiIC3) from Ciona intestinalis (Transparent sea squirt).